The chain runs to 300 residues: CDAN1-interacting nuclease 1 (300 aa).

The protein resides in the nucleus. Its subcellular location is the cytoplasm. May play a role in erythroid cell differentiation. The sequence is that of CDAN1-interacting nuclease 1 (cdin1) from Danio rerio (Zebrafish).